A 343-amino-acid polypeptide reads, in one-letter code: tRNA N6-adenosine threonylcarbamoyltransferase (343 aa).

The Fe cation site is built by histidine 120 and histidine 124. Substrate-binding positions include 142–146 (VVSGG), aspartate 175, glycine 188, aspartate 192, and asparagine 281. Fe cation is bound at residue aspartate 310.

Belongs to the KAE1 / TsaD family. Fe(2+) serves as cofactor.

It localises to the cytoplasm. It carries out the reaction L-threonylcarbamoyladenylate + adenosine(37) in tRNA = N(6)-L-threonylcarbamoyladenosine(37) in tRNA + AMP + H(+). Its function is as follows. Required for the formation of a threonylcarbamoyl group on adenosine at position 37 (t(6)A37) in tRNAs that read codons beginning with adenine. Is involved in the transfer of the threonylcarbamoyl moiety of threonylcarbamoyl-AMP (TC-AMP) to the N6 group of A37, together with TsaE and TsaB. TsaD likely plays a direct catalytic role in this reaction. The protein is tRNA N6-adenosine threonylcarbamoyltransferase of Bacillus cereus (strain ATCC 10987 / NRS 248).